Reading from the N-terminus, the 435-residue chain is 3-ketoacyl-CoA thiolase (435 aa).

Cys-98 acts as the Acyl-thioester intermediate in catalysis. Catalysis depends on proton acceptor residues His-391 and Cys-421.

It belongs to the thiolase-like superfamily. Thiolase family. In terms of assembly, heterotetramer of two alpha chains (FadJ) and two beta chains (FadI).

Its subcellular location is the cytoplasm. The catalysed reaction is an acyl-CoA + acetyl-CoA = a 3-oxoacyl-CoA + CoA. Its pathway is lipid metabolism; fatty acid beta-oxidation. Functionally, catalyzes the final step of fatty acid oxidation in which acetyl-CoA is released and the CoA ester of a fatty acid two carbons shorter is formed. This chain is 3-ketoacyl-CoA thiolase, found in Vibrio cholerae serotype O1 (strain ATCC 39315 / El Tor Inaba N16961).